The following is a 338-amino-acid chain: Tetraacyldisaccharide 4'-kinase (338 aa).

ATP is bound at residue 67–74 (IAGGAGKT).

The protein belongs to the LpxK family.

The enzyme catalyses a lipid A disaccharide + ATP = a lipid IVA + ADP + H(+). Its pathway is glycolipid biosynthesis; lipid IV(A) biosynthesis; lipid IV(A) from (3R)-3-hydroxytetradecanoyl-[acyl-carrier-protein] and UDP-N-acetyl-alpha-D-glucosamine: step 6/6. In terms of biological role, transfers the gamma-phosphate of ATP to the 4'-position of a tetraacyldisaccharide 1-phosphate intermediate (termed DS-1-P) to form tetraacyldisaccharide 1,4'-bis-phosphate (lipid IVA). The sequence is that of Tetraacyldisaccharide 4'-kinase from Acidovorax ebreus (strain TPSY) (Diaphorobacter sp. (strain TPSY)).